The primary structure comprises 364 residues: 4-hydroxy-3-methylbut-2-en-1-yl diphosphate synthase (flavodoxin) (364 aa).

[4Fe-4S] cluster is bound by residues Cys268, Cys271, Cys303, and Glu310.

This sequence belongs to the IspG family. [4Fe-4S] cluster serves as cofactor.

It catalyses the reaction (2E)-4-hydroxy-3-methylbut-2-enyl diphosphate + oxidized [flavodoxin] + H2O + 2 H(+) = 2-C-methyl-D-erythritol 2,4-cyclic diphosphate + reduced [flavodoxin]. It participates in isoprenoid biosynthesis; isopentenyl diphosphate biosynthesis via DXP pathway; isopentenyl diphosphate from 1-deoxy-D-xylulose 5-phosphate: step 5/6. Converts 2C-methyl-D-erythritol 2,4-cyclodiphosphate (ME-2,4cPP) into 1-hydroxy-2-methyl-2-(E)-butenyl 4-diphosphate. This chain is 4-hydroxy-3-methylbut-2-en-1-yl diphosphate synthase (flavodoxin), found in Desulfotalea psychrophila (strain LSv54 / DSM 12343).